The chain runs to 185 residues: CASP-like protein 2D1 (185 aa).

Residues 1-15 (MRTHIDDSASGKNHH) are Cytoplasmic-facing. Residues 16 to 36 (LPMLWFFDSSLRLCAIPLSVA) form a helical membrane-spanning segment. The Extracellular portion of the chain corresponds to 37–64 (TMWITVTNKEDNSSYGMLKYNNLSALKY). 2 N-linked (GlcNAc...) asparagine glycosylation sites follow: Asn-48 and Asn-58. The helical transmembrane segment at 65-85 (MVLVSALCACYALLAAACSLV) threads the bilayer. The Cytoplasmic portion of the chain corresponds to 86–92 (RCFVSKA). The helical transmembrane segment at 93–113 (WIFFVSDQIVAYLAITSVAAV) threads the bilayer. At 114–145 (MEMYYLAYNGAKEDSWSEACSSYGSFCSKVKL) the chain is on the extracellular side. Residues 146–166 (ALILHTITFCCFFVIAVISAF) traverse the membrane as a helical segment. The Cytoplasmic portion of the chain corresponds to 167–185 (RAFSVFDPPFVNSQEVQGD).

It belongs to the Casparian strip membrane proteins (CASP) family. Homodimer and heterodimers.

The protein localises to the cell membrane. The chain is CASP-like protein 2D1 from Glycine max (Soybean).